Here is a 274-residue protein sequence, read N- to C-terminus: Enoyl-CoA isomerase/hydratase fer4 (274 aa).

Substrate-binding positions include 77–81 and G124; that span reads AGADL. The stretch at 79-109 forms a coiled coil; sequence ADLKERREMSEAEVIEFLQDLRHMLEQVEKL.

It belongs to the enoyl-CoA hydratase/isomerase family.

It carries out the reaction a (3S)-3-hydroxyacyl-CoA = a (2E)-enoyl-CoA + H2O. It catalyses the reaction a 4-saturated-(3S)-3-hydroxyacyl-CoA = a (3E)-enoyl-CoA + H2O. It participates in siderophore biosynthesis. Functionally, enoyl-CoA isomerase/hydratase; part of the gene cluster that mediates the biosynthesis of siderophore ferrichrome A which is contributing to organismal virulence. The first step of ferrichrome A biosynthesis is performed by the HMG-CoA synthase hcs1 which catalyzes the generation of HMG-CoA and CoA using acetoacetyl-CoA and acetyl-CoA as substrates. The enoyl-CoA isomerase/hydratase fer4 then catalyzes the conversion of hcs1-produced HMG-CoA to methylglutaconyl-CoA. The acyltransferase fer5 then fuses the fer4-generated methylglutaconyl-CoA with sid1-generated hydroxyornithine to yield methylglutaconyl hydroxyornithine. Methylglutaconyl hydroxyornithine is then available for use by the NRPS fer3 to generate ferrichrome A. The sequence is that of Enoyl-CoA isomerase/hydratase fer4 from Mycosarcoma maydis (Corn smut fungus).